We begin with the raw amino-acid sequence, 99 residues long: RNA-binding protein Hfq (99 aa).

In terms of domain architecture, Sm spans 10-71 (DLFLNQLRKE…ISSILPSKPI (62 aa)). A disordered region spans residues 77–99 (VQNSQVQNTASQQSNNNQNQESK).

Belongs to the Hfq family. In terms of assembly, homohexamer.

In terms of biological role, RNA chaperone that binds small regulatory RNA (sRNAs) and mRNAs to facilitate mRNA translational regulation in response to envelope stress, environmental stress and changes in metabolite concentrations. Also binds with high specificity to tRNAs. The chain is RNA-binding protein Hfq from Caldicellulosiruptor saccharolyticus (strain ATCC 43494 / DSM 8903 / Tp8T 6331).